The following is a 442-amino-acid chain: Putative pyrimidine permease RutG (442 aa).

Over 1 to 57 the chain is Cytoplasmic; that stretch reads MAMFGFPHWQLKSTSTESGVVAPDERLPFAQTAVMGVQHAVAMFGATVLMPILMGLD. Residues 58-78 form a helical membrane-spanning segment; that stretch reads PNLSILMSGIGTLLFFFITGG. A topological domain (periplasmic) is located at residue Arg-79. A helical transmembrane segment spans residues 80 to 100; that stretch reads VPSYLGSSAAFVGVVIAATGF. Residues 101–110 lie on the Cytoplasmic side of the membrane; it reads NGQGINPNIS. The chain crosses the membrane as a helical span at residues 111 to 131; the sequence is IALGGIIACGLVYTVIGLVVM. Over 132 to 140 the chain is Periplasmic; sequence KIGTRWIER. The helical transmembrane segment at 141–161 threads the bilayer; the sequence is LMPPVVTGAVVMAIGLNLAPI. At 162-169 the chain is on the cytoplasmic side; it reads AVKSVSAS. The helical transmembrane segment at 170 to 190 threads the bilayer; it reads AFDSWMAVMTVLCIGLVAVFT. Residues 191–196 are Periplasmic-facing; sequence RGMIQR. Residues 197 to 217 form a helical membrane-spanning segment; sequence LLILVGLIVACLLYGVMTNVL. The Cytoplasmic segment spans residues 218–240; sequence GLGKAVDFTLVSHAAWFGLPHFS. The helical transmembrane segment at 241–261 threads the bilayer; that stretch reads TPAFNGQAMMLIAPVAVILVA. Over 262–284 the chain is Periplasmic; that stretch reads ENLGHLKAVAGMTGRNMDPYMGR. A helical transmembrane segment spans residues 285-305; the sequence is AFVGDGLATMLSGSVGGSGVT. Topologically, residues 306–318 are cytoplasmic; the sequence is TYAENIGVMAVTK. A helical transmembrane segment spans residues 319–339; sequence VYSTLVFVAAAVIAMLLGFSP. At 340-347 the chain is on the periplasmic side; the sequence is KFGALIHT. Residues 348–368 form a helical membrane-spanning segment; it reads IPAAVIGGASIVVFGLIAVAG. At 369–385 the chain is on the cytoplasmic side; the sequence is ARIWVQNRVDLSQNGNL. 2 helical membrane-spanning segments follow: residues 386 to 406 and 407 to 427; these read IMVA…LGGF and TLGG…LLSR. At 428-442 the chain is on the cytoplasmic side; the sequence is KLVDVPPPEVVHQEP.

Belongs to the nucleobase:cation symporter-2 (NCS2) (TC 2.A.40) family.

The protein resides in the cell inner membrane. In terms of biological role, may function as a proton-driven pyrimidine uptake system. This chain is Putative pyrimidine permease RutG (rutG), found in Escherichia coli (strain K12).